A 425-amino-acid chain; its full sequence is Enolase (425 aa).

Gln162 lines the (2R)-2-phosphoglycerate pocket. Residue Glu204 is the Proton donor of the active site. Mg(2+) contacts are provided by Asp241, Glu282, and Asp309. (2R)-2-phosphoglycerate is bound by residues Lys334, Arg363, Ser364, and Lys385. The Proton acceptor role is filled by Lys334.

It belongs to the enolase family. The cofactor is Mg(2+).

The protein resides in the cytoplasm. It is found in the secreted. It localises to the cell surface. It carries out the reaction (2R)-2-phosphoglycerate = phosphoenolpyruvate + H2O. The protein operates within carbohydrate degradation; glycolysis; pyruvate from D-glyceraldehyde 3-phosphate: step 4/5. Its function is as follows. Catalyzes the reversible conversion of 2-phosphoglycerate (2-PG) into phosphoenolpyruvate (PEP). It is essential for the degradation of carbohydrates via glycolysis. The sequence is that of Enolase from Corynebacterium jeikeium (strain K411).